Reading from the N-terminus, the 220-residue chain is HTH-type transcriptional repressor KstR (220 aa).

One can recognise an HTH tetR-type domain in the interval 36-96; sequence RERRKRILDA…SALGREFSRI (61 aa). Positions 59–78 form a DNA-binding region, H-T-H motif; it reads QMRAVADRADVAVGTLYRYF.

As to quaternary structure, homodimer.

Its function is as follows. Controls the expression of genes used for utilizing diverse lipids as energy sources. This chain is HTH-type transcriptional repressor KstR (kstR), found in Mycobacterium tuberculosis (strain ATCC 25618 / H37Rv).